The primary structure comprises 314 residues: Protein OPG185 (314 aa).

An N-terminal signal peptide occupies residues 1–16; that stretch reads MTRLPILLLLISLVYA. Residues 17-121 enclose the Ig-like V-type domain; it reads TPFPQTSKKI…NDTDKVDYEE (105 aa). Residues 17 to 278 lie on the Virion surface side of the membrane; it reads TPFPQTSKKI…SNYKTKDFVE (262 aa). Cys-34 and Cys-103 form a disulfide bridge. Asn-37, Asn-69, Asn-112, and Asn-161 each carry an N-linked (GlcNAc...) asparagine; by host glycan. A compositionally biased stretch (polar residues) spans 193–202; the sequence is NTVSASSGES. A disordered region spans residues 193–214; sequence NTVSASSGESTTDETPEPITDK. Asn-253 carries N-linked (GlcNAc...) asparagine; by host glycosylation. Residues 279–302 traverse the membrane as a helical segment; that stretch reads IFGITALIILSAVAIFCITYYIYN. Over 303 to 314 the chain is Intravirion; sequence KRSRKYKTENKV.

This sequence belongs to the orthopoxvirus OPG185 family. In terms of assembly, heterodimerizes with OPG040. The heterodimer OPG185-OPG040 interacts with components of the entry fusion complex OPG143 and OPG094. Heterodimer with C3/VPC protein; disulfide-linked. Glycosylated; contains phosphate and sulfate-substituted glycans. O-glycosylation is required for hemagglutination and hemadsorption activities of infected cell membranes.

Its subcellular location is the virion membrane. It is found in the host membrane. Prevents cell to cell fusion by interacting with and directing the viral OPG040 protein on the host plasma membrane. The OPG185-OPG040 complex associates with components of the entry fusion complex (EFC) presumably to avoid superinfection and syncytium formation. Via its interaction with C3/VCP protein, protects the infected cell and probably also the extracellular enveloped virus from complement attack. This chain is Protein OPG185 (OPG185), found in Bos taurus (Bovine).